We begin with the raw amino-acid sequence, 388 residues long: Mannitol-1-phosphate 5-dehydrogenase (388 aa).

Residue 5–16 coordinates NAD(+); sequence AIQFGGGNIGRG. The active site involves lysine 213.

This sequence belongs to the mannitol dehydrogenase family. As to quaternary structure, monomer.

The catalysed reaction is D-mannitol 1-phosphate + NAD(+) = beta-D-fructose 6-phosphate + NADH + H(+). Functionally, catalyzes the NAD(H)-dependent interconversion of D-fructose 6-phosphate and D-mannitol 1-phosphate in the mannitol metabolic pathway. Has a strong preference for NADH over NADPH. Required for protection of conidiospores against exogenous stresses such as high temperatures and an oxidative environment. The protein is Mannitol-1-phosphate 5-dehydrogenase (mpdA) of Aspergillus niger.